The sequence spans 246 residues: Biosynthetic peptidoglycan transglycosylase (246 aa).

The chain crosses the membrane as a helical span at residues 27–47 (VVFCFFFAVFALLLIFRFVPI).

The protein belongs to the glycosyltransferase 51 family.

The protein resides in the cell inner membrane. It catalyses the reaction [GlcNAc-(1-&gt;4)-Mur2Ac(oyl-L-Ala-gamma-D-Glu-L-Lys-D-Ala-D-Ala)](n)-di-trans,octa-cis-undecaprenyl diphosphate + beta-D-GlcNAc-(1-&gt;4)-Mur2Ac(oyl-L-Ala-gamma-D-Glu-L-Lys-D-Ala-D-Ala)-di-trans,octa-cis-undecaprenyl diphosphate = [GlcNAc-(1-&gt;4)-Mur2Ac(oyl-L-Ala-gamma-D-Glu-L-Lys-D-Ala-D-Ala)](n+1)-di-trans,octa-cis-undecaprenyl diphosphate + di-trans,octa-cis-undecaprenyl diphosphate + H(+). It participates in cell wall biogenesis; peptidoglycan biosynthesis. Its function is as follows. Peptidoglycan polymerase that catalyzes glycan chain elongation from lipid-linked precursors. This chain is Biosynthetic peptidoglycan transglycosylase, found in Haemophilus influenzae (strain ATCC 51907 / DSM 11121 / KW20 / Rd).